The following is a 648-amino-acid chain: MKYLYATQHLTLNAIKHAKGGHVGMAIGASPILFSLFTKHFHFDPDQPKWINRDRFVLSAGHGSMALYSIFHFAGLISKQEILQHKHGQINTSSHPEYAPNNFIDASTGPLGQGFGMAVGMVLAQKLLANEFKELSDKLFDHYTYVVVGDGDLQEGVSYEVSQIAGLYKLNKLIVLHDSNRVQMDSEVKKVANENLKVRFENVGWNYIHTDDQLENIDQAIIKAKQSDKPTFIEVRTTIAKNTHLEDQYGGHWFIPNEVDFQLFEKRTNTNFNFFNYPDSIYHWFKQTVIERQKQIKEDYNNLLISLKDKPLFKKFTNWIDSDFQALYLNQLDEKKVAKKDSATRNYLKDFLNQINNPNSNLYCLNADVSRSCFIKIGDDNLHENPCSRNIQIGIREFAMATIMNGMALHGGIKVMGGTFLAFADYSKPAIRLGALMNLPVFYVYTHDSYQVGGDGPTHQPYDQLPMLRAIENVCVFRPCDEKETCAGFNYGLLSQDQTTVLVLTRQPLKSIDNTDSLKTLKGGYILLDRKQPDLIIAASGSEVQLAIEFEKVLTKQNVKVRILSVPNITLLLKQDEKYLKSLFDANSSLITIEASSSYEWFCFKKYVKNHAHLGAFSFGESDDGDKVYQQKGFNLERLMKIFTSLRN.

H22 lines the substrate pocket. Thiamine diphosphate-binding positions include H62 and 109 to 111 (GPL). D150 is a binding site for Mg(2+). G151 and N180 together coordinate thiamine diphosphate. Mg(2+) is bound by residues N180 and V182. H252, R345, and S372 together coordinate substrate. A thiamine diphosphate-binding site is contributed by H252. Catalysis depends on E397, which acts as the Proton donor. A thiamine diphosphate-binding site is contributed by F423. 3 residues coordinate substrate: H447, D455, and R506.

The protein belongs to the transketolase family. As to quaternary structure, homodimer. Mg(2+) serves as cofactor. It depends on Ca(2+) as a cofactor. Mn(2+) is required as a cofactor. The cofactor is Co(2+). Requires thiamine diphosphate as cofactor.

It carries out the reaction D-sedoheptulose 7-phosphate + D-glyceraldehyde 3-phosphate = aldehydo-D-ribose 5-phosphate + D-xylulose 5-phosphate. Catalyzes the transfer of a two-carbon ketol group from a ketose donor to an aldose acceptor, via a covalent intermediate with the cofactor thiamine pyrophosphate. The chain is Transketolase (tkt) from Mycoplasma genitalium (strain ATCC 33530 / DSM 19775 / NCTC 10195 / G37) (Mycoplasmoides genitalium).